We begin with the raw amino-acid sequence, 289 residues long: ATP synthase gamma chain (289 aa).

This sequence belongs to the ATPase gamma chain family. As to quaternary structure, F-type ATPases have 2 components, CF(1) - the catalytic core - and CF(0) - the membrane proton channel. CF(1) has five subunits: alpha(3), beta(3), gamma(1), delta(1), epsilon(1). CF(0) has three main subunits: a, b and c.

It is found in the cell inner membrane. Produces ATP from ADP in the presence of a proton gradient across the membrane. The gamma chain is believed to be important in regulating ATPase activity and the flow of protons through the CF(0) complex. This Halorhodospira halophila (strain DSM 244 / SL1) (Ectothiorhodospira halophila (strain DSM 244 / SL1)) protein is ATP synthase gamma chain.